The following is an 867-amino-acid chain: KH domain-containing protein akap-1 (867 aa).

Residues 108–128 (HALLIALGGFSIAALFVWYIN) traverse the membrane as a helical segment. 2 disordered regions span residues 145–458 (SNGL…QKRV) and 481–523 (HENA…GLTT). The segment covering 152–162 (ATASDVQTENG) has biased composition (polar residues). 4 stretches are compositionally biased toward basic and acidic residues: residues 186–211 (QQKDEDEKTQKKDAVQNEKPSIDKKQ), 218–239 (TEKKEEKTVEIHTETEETDHVA), 247–275 (SEHKEHDKKTKQKNDEPVSIDKKSEEIEV), and 298–307 (QFVKKEEPKL). The segment covering 336 to 345 (TKMNDATSPL) has biased composition (polar residues). Residues 363–383 (EMEKSFNEEEFRLNESSDIDR) show a composition bias toward basic and acidic residues. A compositionally biased stretch (basic residues) spans 397-408 (NKNRSSQKRKGG). Basic and acidic residues-rich tracts occupy residues 441-458 (LTKEKSVEETPEKSQKRV) and 481-490 (HENASYEKSD). A compositionally biased stretch (polar residues) spans 494-507 (LDSQNSEASSQDSG). In terms of domain architecture, KH spans 528-595 (LPMYEFEIPN…DEINHCLQML (68 aa)). The region spanning 689–747 (PCQNGLLCAAPVGNAWFRAVTVQYFDETDEVFVKFVDYGGYSKMARQDLRQIRTDLMSL) is the Tudor domain.

It localises to the membrane. In Caenorhabditis elegans, this protein is KH domain-containing protein akap-1.